The chain runs to 417 residues: Serine hydroxymethyltransferase 2 (417 aa).

(6S)-5,6,7,8-tetrahydrofolate is bound by residues L121 and 125–127 (GHL). The residue at position 230 (K230) is an N6-(pyridoxal phosphate)lysine. 355-357 (SPF) contributes to the (6S)-5,6,7,8-tetrahydrofolate binding site.

Belongs to the SHMT family. In terms of assembly, homodimer. Pyridoxal 5'-phosphate is required as a cofactor.

The protein localises to the cytoplasm. The catalysed reaction is (6R)-5,10-methylene-5,6,7,8-tetrahydrofolate + glycine + H2O = (6S)-5,6,7,8-tetrahydrofolate + L-serine. It participates in one-carbon metabolism; tetrahydrofolate interconversion. The protein operates within amino-acid biosynthesis; glycine biosynthesis; glycine from L-serine: step 1/1. Catalyzes the reversible interconversion of serine and glycine with tetrahydrofolate (THF) serving as the one-carbon carrier. This reaction serves as the major source of one-carbon groups required for the biosynthesis of purines, thymidylate, methionine, and other important biomolecules. Also exhibits THF-independent aldolase activity toward beta-hydroxyamino acids, producing glycine and aldehydes, via a retro-aldol mechanism. This chain is Serine hydroxymethyltransferase 2, found in Colwellia psychrerythraea (strain 34H / ATCC BAA-681) (Vibrio psychroerythus).